The chain runs to 243 residues: DNA repair protein RecO (243 aa).

The protein belongs to the RecO family.

In terms of biological role, involved in DNA repair and RecF pathway recombination. This is DNA repair protein RecO from Caulobacter vibrioides (strain NA1000 / CB15N) (Caulobacter crescentus).